We begin with the raw amino-acid sequence, 100 residues long: Urease subunit gamma (100 aa).

This sequence belongs to the urease gamma subunit family. In terms of assembly, heterotrimer of UreA (gamma), UreB (beta) and UreC (alpha) subunits. Three heterotrimers associate to form the active enzyme.

The protein resides in the cytoplasm. The enzyme catalyses urea + 2 H2O + H(+) = hydrogencarbonate + 2 NH4(+). Its pathway is nitrogen metabolism; urea degradation; CO(2) and NH(3) from urea (urease route): step 1/1. The protein is Urease subunit gamma of Synechococcus sp. (strain WH7805).